The chain runs to 291 residues: tRNA U34 carboxymethyltransferase (291 aa).

Residues Lys61, Trp75, Lys80, Gly100, 122-124, Tyr169, and Arg284 contribute to the carboxy-S-adenosyl-L-methionine site; that span reads DPS.

The protein belongs to the class I-like SAM-binding methyltransferase superfamily. CmoB family. Homotetramer.

It carries out the reaction carboxy-S-adenosyl-L-methionine + 5-hydroxyuridine(34) in tRNA = 5-carboxymethoxyuridine(34) in tRNA + S-adenosyl-L-homocysteine + H(+). Functionally, catalyzes carboxymethyl transfer from carboxy-S-adenosyl-L-methionine (Cx-SAM) to 5-hydroxyuridine (ho5U) to form 5-carboxymethoxyuridine (cmo5U) at position 34 in tRNAs. This chain is tRNA U34 carboxymethyltransferase, found in Campylobacter lari (strain RM2100 / D67 / ATCC BAA-1060).